Here is a 493-residue protein sequence, read N- to C-terminus: NADH-quinone oxidoreductase subunit N (493 aa).

A run of 14 helical transmembrane segments spans residues 8–28, 34–54, 71–91, 102–122, 123–143, 157–177, 200–220, 232–252, 266–286, 294–314, 325–345, 370–390, 405–427, and 443–463; these read ALLPFIVLSAAAVAVMLAIAI, LVFWLTVGGLLAGLSTLPHAS, GLFFHALFLLAALVVALLCLA, EIFVLLLTSTLGALLLVSSAH, LAMFFLGLEVLTISLFPMIAY, YLMLSGLASSFLMFGMAMVYG, ALAGLFLILAAIGFKLSLVPF, PTPVTAFLATVSKASVFALLL, FLCVLGLLAVVSILAGNLLAL, LLAYSSIAHMGYLLTGFVAAG, IAFYLAAYTVTSLTAFGAISA, AAVLTLSLLSLAGIPLTVGFV, WPLVATVVIGSGIGIYYYLRVVL, and PAAGTALAAAALVILAAGLFP. A disordered region spans residues 473–493; it reads VPQPPPTADSPQRLTATGGLP.

This sequence belongs to the complex I subunit 2 family. As to quaternary structure, NDH-1 is composed of 14 different subunits. Subunits NuoA, H, J, K, L, M, N constitute the membrane sector of the complex.

The protein resides in the cell inner membrane. It catalyses the reaction a quinone + NADH + 5 H(+)(in) = a quinol + NAD(+) + 4 H(+)(out). NDH-1 shuttles electrons from NADH, via FMN and iron-sulfur (Fe-S) centers, to quinones in the respiratory chain. The immediate electron acceptor for the enzyme in this species is believed to be ubiquinone. Couples the redox reaction to proton translocation (for every two electrons transferred, four hydrogen ions are translocated across the cytoplasmic membrane), and thus conserves the redox energy in a proton gradient. The polypeptide is NADH-quinone oxidoreductase subunit N (Methylococcus capsulatus (strain ATCC 33009 / NCIMB 11132 / Bath)).